Consider the following 89-residue polypeptide: MAISQARKNEIINEYARHEGDTGSAEVQIAVLTAEINSLNEHLSVHKKDHHSYVGQMKKIGHRRNLLRYLRDNDIQRYRELIKSLGLRR.

This sequence belongs to the universal ribosomal protein uS15 family. Part of the 30S ribosomal subunit. Forms a bridge to the 50S subunit in the 70S ribosome, contacting the 23S rRNA.

Functionally, one of the primary rRNA binding proteins, it binds directly to 16S rRNA where it helps nucleate assembly of the platform of the 30S subunit by binding and bridging several RNA helices of the 16S rRNA. Forms an intersubunit bridge (bridge B4) with the 23S rRNA of the 50S subunit in the ribosome. This chain is Small ribosomal subunit protein uS15, found in Latilactobacillus sakei subsp. sakei (strain 23K) (Lactobacillus sakei subsp. sakei).